The primary structure comprises 149 residues: MNKGQRHIKIREIIANNDVETQDELVEQLKAAGYNVTQATVSRDIKELHLVKVPMMDGRYKYSLPADQRFNPLQKLKRGLVDSFVSIDRTDNLIVMKTLPGNAHAIGALIDNLDWTEIMGTICGDDTILIICKDKQDGPVVTERFLNML.

The protein belongs to the ArgR family.

It localises to the cytoplasm. Its pathway is amino-acid biosynthesis; L-arginine biosynthesis [regulation]. In terms of biological role, regulates arginine biosynthesis genes. This chain is Arginine repressor, found in Halalkalibacterium halodurans (strain ATCC BAA-125 / DSM 18197 / FERM 7344 / JCM 9153 / C-125) (Bacillus halodurans).